The sequence spans 141 residues: Nucleoside diphosphate kinase (141 aa).

Residues Lys-11, Phe-59, Arg-87, Thr-93, Arg-104, and Asn-114 each coordinate ATP. The active-site Pros-phosphohistidine intermediate is His-117.

The protein belongs to the NDK family. As to quaternary structure, homotetramer. The cofactor is Mg(2+).

It is found in the cytoplasm. It carries out the reaction a 2'-deoxyribonucleoside 5'-diphosphate + ATP = a 2'-deoxyribonucleoside 5'-triphosphate + ADP. It catalyses the reaction a ribonucleoside 5'-diphosphate + ATP = a ribonucleoside 5'-triphosphate + ADP. Its function is as follows. Major role in the synthesis of nucleoside triphosphates other than ATP. The ATP gamma phosphate is transferred to the NDP beta phosphate via a ping-pong mechanism, using a phosphorylated active-site intermediate. The sequence is that of Nucleoside diphosphate kinase from Leptothrix cholodnii (strain ATCC 51168 / LMG 8142 / SP-6) (Leptothrix discophora (strain SP-6)).